Consider the following 427-residue polypeptide: Enolase (427 aa).

Glutamine 163 is a (2R)-2-phosphoglycerate binding site. Glutamate 205 serves as the catalytic Proton donor. Positions 242, 287, and 314 each coordinate Mg(2+). (2R)-2-phosphoglycerate is bound by residues lysine 339, arginine 368, serine 369, and lysine 390. The Proton acceptor role is filled by lysine 339.

It belongs to the enolase family. Requires Mg(2+) as cofactor.

The protein resides in the cytoplasm. Its subcellular location is the secreted. It localises to the cell surface. It carries out the reaction (2R)-2-phosphoglycerate = phosphoenolpyruvate + H2O. It participates in carbohydrate degradation; glycolysis; pyruvate from D-glyceraldehyde 3-phosphate: step 4/5. Its function is as follows. Catalyzes the reversible conversion of 2-phosphoglycerate (2-PG) into phosphoenolpyruvate (PEP). It is essential for the degradation of carbohydrates via glycolysis. This Solibacter usitatus (strain Ellin6076) protein is Enolase.